Reading from the N-terminus, the 481-residue chain is NADH-quinone oxidoreductase subunit N (481 aa).

14 consecutive transmembrane segments (helical) span residues 11-31, 38-58, 74-94, 103-123, 128-148, 163-183, 208-228, 241-261, 272-292, 300-322, 332-352, 368-388, 404-424, and 450-470; these read ALPE…DLWA, WTHY…LAVW, GMSR…FVYA, IFKG…SVMV, FLTA…LIAL, FVLG…VYGA, LGLV…PFHM, VTAL…FRIL, WSLM…LAAI, MLAY…GAVG, TYAL…DGDN, VWLA…PPLM, GYVW…FYYL, and SLLS…QTVI.

It belongs to the complex I subunit 2 family. In terms of assembly, NDH-1 is composed of 14 different subunits. Subunits NuoA, H, J, K, L, M, N constitute the membrane sector of the complex.

It is found in the cell inner membrane. It catalyses the reaction a quinone + NADH + 5 H(+)(in) = a quinol + NAD(+) + 4 H(+)(out). NDH-1 shuttles electrons from NADH, via FMN and iron-sulfur (Fe-S) centers, to quinones in the respiratory chain. The immediate electron acceptor for the enzyme in this species is believed to be ubiquinone. Couples the redox reaction to proton translocation (for every two electrons transferred, four hydrogen ions are translocated across the cytoplasmic membrane), and thus conserves the redox energy in a proton gradient. The chain is NADH-quinone oxidoreductase subunit N from Neisseria gonorrhoeae (strain ATCC 700825 / FA 1090).